The following is a 75-amino-acid chain: MVYLKRPYFRKSRSCPLAQCPDEDIDYKNRALLSKFVSEYGRILPSRITSVSSRKQKLLARAVKRARFLALLPYC.

This sequence belongs to the bacterial ribosomal protein bS18 family. As to quaternary structure, part of the 30S ribosomal subunit. Forms a tight heterodimer with protein bS6.

Functionally, binds as a heterodimer with protein bS6 to the central domain of the 16S rRNA, where it helps stabilize the platform of the 30S subunit. The polypeptide is Small ribosomal subunit protein bS18 (Anaplasma marginale (strain St. Maries)).